Consider the following 784-residue polypeptide: PWWP domain-containing protein 2A (784 aa).

Disordered regions lie at residues 1 to 32 (MAAV…LGRL), 244 to 272 (KPVE…PEDV), 463 to 567 (AKEK…EMQD), and 605 to 654 (SSSA…SSKE). Residues 244-266 (KPVESIQEESKSFHEEPLVKSEE) are compositionally biased toward basic and acidic residues. Positions 536–556 (TRYSATRSAGETPSEIQSPSN) are enriched in polar residues. Low complexity predominate over residues 605–614 (SSSASVCSSD). The PWWP domain occupies 684-744 (VGDIVWAKIY…LSQLTPFLEN (61 aa)).

The protein resides in the nucleus. Functionally, H2A.Z-specific chromatin binding protein which plays an important role in the neural crest cell differentiation and/or migration during early development and is essential for the development of the head and eye. Acts as an adapter between distinct nucleosome components (H3K36me3 or H2A.Z) and chromatin-modifying complexes, contributing to the regulation of the levels of histone acetylation at actively transcribed genes. This Xenopus tropicalis (Western clawed frog) protein is PWWP domain-containing protein 2A (pwwp2a).